Reading from the N-terminus, the 526-residue chain is MDSESESESNPSTTDEFDRFLDAPDEFYYDCLPIRSNSHQPSSLLRRRKSAHRRDLISSDIETEPSSSSDGFDVGEKSSYVEKNAELRGDIDTSDVIESTKDSIDLSSEKENDLDVISSSGNDMDVIDSGRNRVDPFQEESTVTTVSSDDQGDDDYAGSVPQFREPPNSTEWSLLGFLVGLVIKAIEFQVSFMTSLLTFPPWLLRNCFLFFFDPFSTIRFGRRFLMARVAGISDMIFGYMNPFRLKDTKQMLSIVCKFGWGMFWAVYVGIVLFGLLVSSLMIGGYVINRIADKPFEVKETLNFDYTKNSPEAYVPISSCAGVECEGSCKESNEMSKIRGLRVIPRDQKLDIILSMTLPESAYNKNLGMFQVRVDFLSVDGQTIASIRRPCMLRFRSEPIRLVQTFFKVVPLVTGYVSEIQTLSLKLKGFVEKDIPTACLKIIIEQRAEFRPGAGIPELYDASLSVESGLPFFRKIIWKWRKTLFVWISMSLFITELLFTLVCCRPLIIPRTQPRDRSPSNPTGVWR.

The disordered stretch occupies residues 33–77; the sequence is PIRSNSHQPSSLLRRRKSAHRRDLISSDIETEPSSSSDGFDVGEK. A compositionally biased stretch (low complexity) spans 58–70; the sequence is SSDIETEPSSSSD. Transmembrane regions (helical) follow at residues 195–215, 224–243, 258–278, and 483–503; these read SLLT…FDPF, FLMA…MNPF, FGWG…LLVS, and LFVW…LVCC.

This sequence belongs to the seipin family. As to expression, expressed in seeds, seedlings, leaves, stems and roots. Not detected in flowers.

The protein localises to the endoplasmic reticulum membrane. Involved in lipid metabolism and lipid droplet (LD) morphology, number, and size. Supports the formation of small-sized LDs and modulates triacylglycerol accumulation. Induces probably a reorganization of the endoplasmic reticulum into LD-forming domains. This chain is Seipin-2, found in Arabidopsis thaliana (Mouse-ear cress).